Reading from the N-terminus, the 306-residue chain is N(1)-aminopropylagmatine ureohydrolase (306 aa).

Mn(2+) contacts are provided by His-121, Asp-145, His-147, Asp-149, Asp-228, and Asp-230.

The protein belongs to the arginase family. Requires Mn(2+) as cofactor.

The enzyme catalyses N(1)-(3-aminopropyl)agmatine + H2O = urea + spermidine. It functions in the pathway amine and polyamine biosynthesis; spermidine biosynthesis. Ureohydrolase involved in the biosynthesis of spermidine via the carboxyaminopropylagmatine (CAPA) pathway. Catalyzes the conversion of aminopropylagmatine (APA) to spermidine and urea. Is highly specific to APA and incapable of releasing measurable urea from CAPA, agmatine, arginine, guanidine, guanidinobutyrate and guanidinopropionate. This Synechocystis sp. (strain ATCC 27184 / PCC 6803 / Kazusa) protein is N(1)-aminopropylagmatine ureohydrolase.